A 113-amino-acid polypeptide reads, in one-letter code: Large ribosomal subunit protein uL22 (113 aa).

This sequence belongs to the universal ribosomal protein uL22 family. Part of the 50S ribosomal subunit.

Its function is as follows. This protein binds specifically to 23S rRNA; its binding is stimulated by other ribosomal proteins, e.g. L4, L17, and L20. It is important during the early stages of 50S assembly. It makes multiple contacts with different domains of the 23S rRNA in the assembled 50S subunit and ribosome. Functionally, the globular domain of the protein is located near the polypeptide exit tunnel on the outside of the subunit, while an extended beta-hairpin is found that lines the wall of the exit tunnel in the center of the 70S ribosome. This is Large ribosomal subunit protein uL22 from Carboxydothermus hydrogenoformans (strain ATCC BAA-161 / DSM 6008 / Z-2901).